The sequence spans 325 residues: Beta-ketoacyl-[acyl-carrier-protein] synthase III (325 aa).

Active-site residues include Cys119 and His252. Positions 253-257 (QANIR) are ACP-binding. Residue Asn282 is part of the active site.

This sequence belongs to the thiolase-like superfamily. FabH family. In terms of assembly, homodimer.

Its subcellular location is the cytoplasm. The enzyme catalyses malonyl-[ACP] + acetyl-CoA + H(+) = 3-oxobutanoyl-[ACP] + CO2 + CoA. It participates in lipid metabolism; fatty acid biosynthesis. In terms of biological role, catalyzes the condensation reaction of fatty acid synthesis by the addition to an acyl acceptor of two carbons from malonyl-ACP. Catalyzes the first condensation reaction which initiates fatty acid synthesis and may therefore play a role in governing the total rate of fatty acid production. Possesses both acetoacetyl-ACP synthase and acetyl transacylase activities. Its substrate specificity determines the biosynthesis of branched-chain and/or straight-chain of fatty acids. This Acidovorax ebreus (strain TPSY) (Diaphorobacter sp. (strain TPSY)) protein is Beta-ketoacyl-[acyl-carrier-protein] synthase III.